The primary structure comprises 446 residues: Regulator of drug sensitivity 2 (446 aa).

Positions 15–45 form a DNA-binding region, zn(2)-C6 fungal-type; that stretch reads KTCLFCKRSHVVCDKQRPCSRCVKRDIAHLC. 2 disordered regions span residues 52–106 and 158–218; these read VPNE…PKLD and ASNV…KEES. Polar residues-rich tracts occupy residues 56-70 and 84-96; these read MPSQ…NNIQ and DYQN…SGST. Phosphoserine is present on S102. The segment covering 160–177 has biased composition (polar residues); it reads NVHLENGSQTTQSPLEYQ. A compositionally biased stretch (basic and acidic residues) spans 178 to 192; that stretch reads NDNRRDEIGVARQEN. A compositionally biased stretch (polar residues) spans 193–206; the sequence is RSPTIMSGSSNSIS. Residues 207–218 are compositionally biased toward basic and acidic residues; that stretch reads KGDKQDQEKEES. T231 is modified (phosphothreonine).

Phosphorylated by SNF1 in absence of glucose. The phosphorylation is required for induction of transcription of gluconeogenic genes.

It is found in the cytoplasm. The protein localises to the nucleus. Functionally, transcription factor which regulates the expression of genes for gluconeogenesis, the TCA cycle, and glucose metabolism. Involved in the cell wall remodeling process and drug resistance. This chain is Regulator of drug sensitivity 2 (RDS2), found in Saccharomyces cerevisiae (strain ATCC 204508 / S288c) (Baker's yeast).